A 197-amino-acid chain; its full sequence is Probable GTP-binding protein EngB (197 aa).

Positions 25 to 197 constitute an EngB-type G domain; the sequence is SAPEIAFAGR…VRDEFFKFTR (173 aa). Residues 33 to 40, 60 to 64, 79 to 82, 146 to 149, and 177 to 179 contribute to the GTP site; these read GRSNVGKS, GCTRQ, DLPG, TKID, and ISV. Positions 40 and 62 each coordinate Mg(2+).

This sequence belongs to the TRAFAC class TrmE-Era-EngA-EngB-Septin-like GTPase superfamily. EngB GTPase family. Requires Mg(2+) as cofactor.

In terms of biological role, necessary for normal cell division and for the maintenance of normal septation. This is Probable GTP-binding protein EngB from Wolbachia sp. subsp. Brugia malayi (strain TRS).